Consider the following 807-residue polypeptide: Sucrose synthase 2 (807 aa).

Residues 274 to 752 (MVFNVVILSP…GLKRIYERYT (479 aa)) form a GT-B glycosyltransferase region.

This sequence belongs to the glycosyltransferase 1 family. Plant sucrose synthase subfamily. Detected in the whole plant but at lower levels. Predominantly expressed in developing siliques. Also detected in the root tip. Detected in the embryo, endosperm and seed coat (at the protein level).

The protein localises to the cytoplasm. Its subcellular location is the plastid membrane. It carries out the reaction an NDP-alpha-D-glucose + D-fructose = a ribonucleoside 5'-diphosphate + sucrose + H(+). Functionally, sucrose-cleaving enzyme that provides UDP-glucose and fructose for various metabolic pathways. Modulates metabolic homeostasis and directs carbon towards starch synthesis in developing seeds. This is Sucrose synthase 2 (SUS2) from Arabidopsis thaliana (Mouse-ear cress).